We begin with the raw amino-acid sequence, 532 residues long: CTP synthase (532 aa).

An amidoligase domain region spans residues 1–267; sequence MTKYIFVTGG…DDIVLEHLQL (267 aa). Residue serine 13 participates in CTP binding. Residue serine 13 coordinates UTP. 14–19 is an ATP binding site; it reads SIGKGI. Tyrosine 54 contributes to the L-glutamine binding site. Aspartate 71 contacts ATP. Residues aspartate 71 and glutamate 141 each contribute to the Mg(2+) site. CTP contacts are provided by residues 148–150, 188–193, and lysine 224; these read DIE and KTKPTQ. Residues 188–193 and lysine 224 each bind UTP; that span reads KTKPTQ. The 241-residue stretch at 292 to 532 folds into the Glutamine amidotransferase type-1 domain; sequence RIGLVGKYVS…DFVGAALNNK (241 aa). Glycine 354 provides a ligand contact to L-glutamine. Cysteine 381 (nucleophile; for glutamine hydrolysis) is an active-site residue. L-glutamine-binding positions include 382-385, glutamate 405, and arginine 462; that span reads LGMQ. Catalysis depends on residues histidine 507 and glutamate 509.

This sequence belongs to the CTP synthase family. In terms of assembly, homotetramer.

The enzyme catalyses UTP + L-glutamine + ATP + H2O = CTP + L-glutamate + ADP + phosphate + 2 H(+). It carries out the reaction L-glutamine + H2O = L-glutamate + NH4(+). It catalyses the reaction UTP + NH4(+) + ATP = CTP + ADP + phosphate + 2 H(+). The protein operates within pyrimidine metabolism; CTP biosynthesis via de novo pathway; CTP from UDP: step 2/2. Its activity is regulated as follows. Allosterically activated by GTP, when glutamine is the substrate; GTP has no effect on the reaction when ammonia is the substrate. The allosteric effector GTP functions by stabilizing the protein conformation that binds the tetrahedral intermediate(s) formed during glutamine hydrolysis. Inhibited by the product CTP, via allosteric rather than competitive inhibition. Catalyzes the ATP-dependent amination of UTP to CTP with either L-glutamine or ammonia as the source of nitrogen. Regulates intracellular CTP levels through interactions with the four ribonucleotide triphosphates. The polypeptide is CTP synthase (Listeria innocua serovar 6a (strain ATCC BAA-680 / CLIP 11262)).